Reading from the N-terminus, the 456-residue chain is tRNA modification GTPase MnmE (456 aa).

Residues R25, E87, and R126 each coordinate (6S)-5-formyl-5,6,7,8-tetrahydrofolate. Residues 221 to 377 form the TrmE-type G domain; it reads GLKVAIVGQP…LENAIIEQVN (157 aa). N231 provides a ligand contact to K(+). GTP contacts are provided by residues 231 to 236, 250 to 256, and 275 to 278; these read NVGKSS, TDLPGTT, and DTAG. S235 serves as a coordination point for Mg(2+). K(+)-binding residues include T250, L252, and T255. T256 is a binding site for Mg(2+). K456 is a binding site for (6S)-5-formyl-5,6,7,8-tetrahydrofolate.

It belongs to the TRAFAC class TrmE-Era-EngA-EngB-Septin-like GTPase superfamily. TrmE GTPase family. Homodimer. Heterotetramer of two MnmE and two MnmG subunits. It depends on K(+) as a cofactor.

Its subcellular location is the cytoplasm. Exhibits a very high intrinsic GTPase hydrolysis rate. Involved in the addition of a carboxymethylaminomethyl (cmnm) group at the wobble position (U34) of certain tRNAs, forming tRNA-cmnm(5)s(2)U34. The chain is tRNA modification GTPase MnmE from Synechocystis sp. (strain ATCC 27184 / PCC 6803 / Kazusa).